Reading from the N-terminus, the 109-residue chain is uncharacterized protein (109 aa).

This is an uncharacterized protein from Methanocaldococcus jannaschii (strain ATCC 43067 / DSM 2661 / JAL-1 / JCM 10045 / NBRC 100440) (Methanococcus jannaschii).